The sequence spans 118 residues: MSSNVTSPSGNKNKSSHANASPSSKGKAKAKVDHPMDEDEEEEEEEEQGGSDEEEDDDEDEDALEEIDPSVILPQGRRTRGVRVDYTSKEALAKAGFKGKEELEEDDTEDDHDVQMKD.

Over residues 1-17 the composition is skewed to polar residues; it reads MSSNVTSPSGNKNKSSH. The disordered stretch occupies residues 1–118; sequence MSSNVTSPSG…EDDHDVQMKD (118 aa). Acidic residues predominate over residues 36–68; that stretch reads MDEDEEEEEEEEQGGSDEEEDDDEDEDALEEID. The segment covering 82–92 has biased composition (basic and acidic residues); it reads VRVDYTSKEAL. Positions 102–112 are enriched in acidic residues; it reads ELEEDDTEDDH.

This sequence belongs to the CHZ1 family. In terms of assembly, forms a heterotrimer with H2A.Z-H2B, stabilizing the association of the histone dimer. Also, with a lower affinity, forms a heterotrimer with H2A-H2B.

Its subcellular location is the nucleus. Its function is as follows. Forms a chaperone-bound H2A.Z-H2B complex that acts as a source for SWR1 complex-dependent H2A to H2A.Z histone replacement in chromatin. This Laccaria bicolor (strain S238N-H82 / ATCC MYA-4686) (Bicoloured deceiver) protein is Histone H2A.Z-specific chaperone CHZ1 (CHZ1).